Consider the following 141-residue polypeptide: Hemoglobin subunit alpha (141 aa).

The 141-residue stretch at 1–141 (VLSSDDKCNV…VSSVLTSKYR (141 aa)) folds into the Globin domain. Histidine 58 serves as a coordination point for O2. Histidine 87 is a heme b binding site.

The protein belongs to the globin family. Heterotetramer of two alpha chains and two beta chains. As to expression, red blood cells.

Involved in oxygen transport from the lung to the various peripheral tissues. The protein is Hemoglobin subunit alpha (HBA) of Crocodylus niloticus (Nile crocodile).